A 103-amino-acid polypeptide reads, in one-letter code: MQPNDITFFQRFQNDILAGRKTITIRDASESHFKAGDVLRVGRFEDDGYFCTIEVTGTSTVTLDTLNEKHAQQENMSLDELKRVIAEIYPNQTQFYVIDFKCL.

The ASCH domain occupies 6 to 94 (ITFFQRFQND…IAEIYPNQTQ (89 aa)). The active-site Proton acceptor is K21. T24 (nucleophile) is an active-site residue. E74 acts as the Proton donor in catalysis.

Belongs to the N(4)-acetylcytidine amidohydrolase family.

It carries out the reaction N(4)-acetylcytidine + H2O = cytidine + acetate + H(+). The catalysed reaction is N(4)-acetyl-2'-deoxycytidine + H2O = 2'-deoxycytidine + acetate + H(+). The enzyme catalyses N(4)-acetylcytosine + H2O = cytosine + acetate + H(+). Functionally, catalyzes the hydrolysis of N(4)-acetylcytidine (ac4C). This Salmonella heidelberg (strain SL476) protein is N(4)-acetylcytidine amidohydrolase (yqfB).